Consider the following 233-residue polypeptide: Nickel import system ATP-binding protein NikE (233 aa).

In terms of domain architecture, ABC transporter spans 2-228 (IELKHVTFGY…DRHSYTKELV (227 aa)). 35–42 (GESGCGKS) lines the ATP pocket.

This sequence belongs to the ABC transporter superfamily. As to quaternary structure, the complex is composed of two ATP-binding proteins (NikD and NikE), two transmembrane proteins (NikB and NikC) and a solute-binding protein (NikA).

The protein resides in the cell membrane. The catalysed reaction is Ni(2+)(out) + ATP + H2O = Ni(2+)(in) + ADP + phosphate + H(+). Functionally, part of the ABC transporter complex NikABCDE (Opp2) involved in nickel import. Probably responsible for energy coupling to the transport system. The chain is Nickel import system ATP-binding protein NikE from Staphylococcus aureus (strain bovine RF122 / ET3-1).